Consider the following 182-residue polypeptide: Sec-independent protein translocase protein TatB (182 aa).

The chain crosses the membrane as a helical span at residues 1–21; sequence MFDIGFSELLLVFVIGLIVLG. Disordered stretches follow at residues 88-107 and 121-182; these read AAESMKRTYSANDPEQASDE and TQHE…SDKP. Residues 168–182 show a composition bias toward low complexity; the sequence is AAPVVESSPSSSDKP.

This sequence belongs to the TatB family. The Tat system comprises two distinct complexes: a TatABC complex, containing multiple copies of TatA, TatB and TatC subunits, and a separate TatA complex, containing only TatA subunits. Substrates initially bind to the TatABC complex, which probably triggers association of the separate TatA complex to form the active translocon.

It is found in the cell inner membrane. Functionally, part of the twin-arginine translocation (Tat) system that transports large folded proteins containing a characteristic twin-arginine motif in their signal peptide across membranes. Together with TatC, TatB is part of a receptor directly interacting with Tat signal peptides. TatB may form an oligomeric binding site that transiently accommodates folded Tat precursor proteins before their translocation. This chain is Sec-independent protein translocase protein TatB, found in Salmonella typhi.